The sequence spans 87 residues: Toxin Cll3 (87 aa).

The N-terminal stretch at methionine 1–alanine 19 is a signal peptide. Residues lysine 20–tyrosine 85 enclose the LCN-type CS-alpha/beta domain. Intrachain disulfides connect cysteine 31–cysteine 84, cysteine 35–cysteine 60, cysteine 44–cysteine 65, and cysteine 48–cysteine 67. Tyrosine 85 is subject to Tyrosine amide.

This sequence belongs to the long (4 C-C) scorpion toxin superfamily. Sodium channel inhibitor family. Beta subfamily. As to expression, expressed by the venom gland.

Its subcellular location is the secreted. Its function is as follows. Beta toxins bind voltage-independently at site-4 of sodium channels (Nav) and shift the voltage of activation toward more negative potentials thereby affecting sodium channel activation and promoting spontaneous and repetitive firing. This chain is Toxin Cll3, found in Centruroides limpidus (Mexican scorpion).